The chain runs to 402 residues: UDP-N-acetylmuramoylalanine--D-glutamate ligase (402 aa).

97-103 provides a ligand contact to ATP; sequence GTNGKTT.

This sequence belongs to the MurCDEF family.

The protein localises to the cytoplasm. The catalysed reaction is UDP-N-acetyl-alpha-D-muramoyl-L-alanine + D-glutamate + ATP = UDP-N-acetyl-alpha-D-muramoyl-L-alanyl-D-glutamate + ADP + phosphate + H(+). Its pathway is cell wall biogenesis; peptidoglycan biosynthesis. Functionally, cell wall formation. Catalyzes the addition of glutamate to the nucleotide precursor UDP-N-acetylmuramoyl-L-alanine (UMA). The polypeptide is UDP-N-acetylmuramoylalanine--D-glutamate ligase (Campylobacter jejuni subsp. jejuni serotype O:6 (strain 81116 / NCTC 11828)).